A 288-amino-acid chain; its full sequence is Acetyl-coenzyme A carboxylase carboxyl transferase subunit beta, chloroplastic (288 aa).

The CoA carboxyltransferase N-terminal domain occupies 30-288 (LWIKCFDCGL…QILSLHNHSK (259 aa)). Cys34, Cys37, Cys53, and Cys56 together coordinate Zn(2+). The C4-type zinc finger occupies 34–56 (CFDCGLLMYSKVLKRNLKVCPQC).

This sequence belongs to the AccD/PCCB family. In terms of assembly, acetyl-CoA carboxylase is a heterohexamer composed of biotin carboxyl carrier protein, biotin carboxylase and 2 subunits each of ACCase subunit alpha and ACCase plastid-coded subunit beta (accD). Requires Zn(2+) as cofactor.

Its subcellular location is the plastid. The protein resides in the chloroplast stroma. The catalysed reaction is N(6)-carboxybiotinyl-L-lysyl-[protein] + acetyl-CoA = N(6)-biotinyl-L-lysyl-[protein] + malonyl-CoA. Its pathway is lipid metabolism; malonyl-CoA biosynthesis; malonyl-CoA from acetyl-CoA: step 1/1. Its function is as follows. Component of the acetyl coenzyme A carboxylase (ACC) complex. Biotin carboxylase (BC) catalyzes the carboxylation of biotin on its carrier protein (BCCP) and then the CO(2) group is transferred by the transcarboxylase to acetyl-CoA to form malonyl-CoA. The polypeptide is Acetyl-coenzyme A carboxylase carboxyl transferase subunit beta, chloroplastic (Pyropia yezoensis (Susabi-nori)).